A 386-amino-acid chain; its full sequence is Succinyl-diaminopimelate desuccinylase (386 aa).

Position 77 (H77) interacts with Zn(2+). The active site involves D79. Position 110 (D110) interacts with Zn(2+). The active-site Proton acceptor is E144. Zn(2+) is bound by residues E145, E173, and H359.

It belongs to the peptidase M20A family. DapE subfamily. In terms of assembly, homodimer. It depends on Zn(2+) as a cofactor. Co(2+) is required as a cofactor.

The enzyme catalyses N-succinyl-(2S,6S)-2,6-diaminopimelate + H2O = (2S,6S)-2,6-diaminopimelate + succinate. It functions in the pathway amino-acid biosynthesis; L-lysine biosynthesis via DAP pathway; LL-2,6-diaminopimelate from (S)-tetrahydrodipicolinate (succinylase route): step 3/3. Catalyzes the hydrolysis of N-succinyl-L,L-diaminopimelic acid (SDAP), forming succinate and LL-2,6-diaminopimelate (DAP), an intermediate involved in the bacterial biosynthesis of lysine and meso-diaminopimelic acid, an essential component of bacterial cell walls. This Ralstonia pickettii (strain 12J) protein is Succinyl-diaminopimelate desuccinylase.